Here is a 129-residue protein sequence, read N- to C-terminus: Protein BEX2 (129 aa).

The disordered stretch occupies residues 1–38 (MESKVEQGVKNLNMENDHQEKEEKEEKPQDANKREPVV). The segment covering 15–36 (ENDHQEKEEKEEKPQDANKREP) has biased composition (basic and acidic residues). The residue at position 51 (Arg-51) is an Omega-N-methylarginine. The segment at 108–129 (SLRAVSTDPPHHDHHDEFCLMP) is disordered. Over residues 116–129 (PPHHDHHDEFCLMP) the composition is skewed to basic and acidic residues. Residues 118–122 (HHDHH) are his cluster. A Zn(2+)-binding site is contributed by Cys-126.

Belongs to the BEX family. As to quaternary structure, interacts with LMO2, possibly leading to regulate the transcriptional activity of a DNA-binding complex containing LMO2. Interacts with OMP.

Its subcellular location is the nucleus. It is found in the cytoplasm. Its function is as follows. Regulator of mitochondrial apoptosis and G1 cell cycle. Regulates the level of PP2A regulatory subunit B and PP2A phosphatase activity. In absence of reductive stress, acts as a pseudosubstrate for the CRL2(FEM1B) complex: associates with FEM1B via zinc, thereby preventing association between FEM1B and its substrates. This is Protein BEX2 (Bex2) from Rattus norvegicus (Rat).